Reading from the N-terminus, the 343-residue chain is Anthranilate phosphoribosyltransferase (343 aa).

5-phospho-alpha-D-ribose 1-diphosphate is bound by residues G86, 89 to 90 (GD), T94, 96 to 99 (NIST), 114 to 122 (KHGNKSASG), and S126. G86 is an anthranilate binding site. A Mg(2+)-binding site is contributed by S98. Residue N117 participates in anthranilate binding. Residue R172 coordinates anthranilate. D231 and E232 together coordinate Mg(2+).

It belongs to the anthranilate phosphoribosyltransferase family. In terms of assembly, homodimer. Mg(2+) is required as a cofactor.

It catalyses the reaction N-(5-phospho-beta-D-ribosyl)anthranilate + diphosphate = 5-phospho-alpha-D-ribose 1-diphosphate + anthranilate. It participates in amino-acid biosynthesis; L-tryptophan biosynthesis; L-tryptophan from chorismate: step 2/5. Catalyzes the transfer of the phosphoribosyl group of 5-phosphorylribose-1-pyrophosphate (PRPP) to anthranilate to yield N-(5'-phosphoribosyl)-anthranilate (PRA). The chain is Anthranilate phosphoribosyltransferase from Prochlorococcus marinus subsp. pastoris (strain CCMP1986 / NIES-2087 / MED4).